Reading from the N-terminus, the 596-residue chain is Zinc finger E-box-binding homeobox protein zag-1 (596 aa).

A C2H2-type 1 zinc finger spans residues 24–46 (FKCPECTKAFKFKHHLKEHIRIH). Residues 52 to 72 (FECQQCHKRFSHSGSYSSHMS) form a C2H2-type 2; degenerate zinc finger. Polar residues predominate over residues 133 to 145 (LENGTSPTPTQEP). Disordered stretches follow at residues 133–225 (LENG…RPLR), 324–369 (NNSL…EPEW), and 395–421 (GFVT…GSSS). Residues 165-179 (SEVKTEVKTEVKTED) show a composition bias toward basic and acidic residues. Polar residues predominate over residues 188–200 (PAVSMSLSPAPEQ). Residues 201 to 216 (NGNESMNNGGSGSDGK) are compositionally biased toward low complexity. Residues 223–282 (PLRSRSFLNDSQVAVLQNHFKRNPFPSKYELSAVAEQIGVNKRVVQVWFQNTRAKERRSN) constitute a DNA-binding region (homeobox). The span at 331-355 (QDERNNENTDEVMDHDGLKDGKETP) shows a compositional bias: basic and acidic residues. 2 consecutive C2H2-type zinc fingers follow at residues 481–503 (FSCD…KYEH) and 509–531 (YKCD…KRLH). The C2H2-type 5; degenerate zinc-finger motif lies at 537–560 (FQCDKCLKRFSHSGSYSQHMNHRY). Residues 569-596 (QPASPSDVLNGGSVTVSPSSSNTPPPST) form a disordered region. Low complexity predominate over residues 578-590 (NGGSVTVSPSSSN).

Expressed in the six touch receptor neurons (TRNs) but not in the FLP and PVD neurons. Expressed in the M4 cholinergic motor neuron.

It localises to the nucleus. Functionally, transcription factor. Down-regulates expression of genes involved in either the synthesis or reuptake of serotonin, dopamine and GABA. Acts as a transcriptional repressor to regulate multiple, discrete, neuron-specific aspects of terminal differentiation, including cell migration, axonal development and gene expression. Promotes touch receptor neuron differentiation by repressing the expression of egl-44 and egl-46. As egl-44 and egl-46, probably acting as a heterodimer, repress expression of zag-1 in FLP neurons, together these proteins form a bistable, negative-feedback loop that regulates the choice between neuronal fates. Required for axon guidance. Involved in the proper development of the pharynx. Required for pharynx isthmus peristalsis, probably via a role in the differentiation of the M4 cholinergic motor neuron. Directly represses its own transcription by interacting with conserved E-box sequence motifs 5'-CACCTG-3' in its own promoter. May also act as a transcriptional activator of the homeodomain ceh-28. The polypeptide is Zinc finger E-box-binding homeobox protein zag-1 (Caenorhabditis elegans).